The following is a 125-amino-acid chain: Large ribosomal subunit protein bL12 (125 aa).

Belongs to the bacterial ribosomal protein bL12 family. As to quaternary structure, homodimer. Part of the ribosomal stalk of the 50S ribosomal subunit. Forms a multimeric L10(L12)X complex, where L10 forms an elongated spine to which 2 to 4 L12 dimers bind in a sequential fashion. Binds GTP-bound translation factors.

Functionally, forms part of the ribosomal stalk which helps the ribosome interact with GTP-bound translation factors. Is thus essential for accurate translation. In Rickettsia prowazekii (strain Madrid E), this protein is Large ribosomal subunit protein bL12.